Reading from the N-terminus, the 100-residue chain is Urease subunit gamma (100 aa).

This sequence belongs to the urease gamma subunit family. Heterotrimer of UreA (gamma), UreB (beta) and UreC (alpha) subunits. Three heterotrimers associate to form the active enzyme.

The protein resides in the cytoplasm. It carries out the reaction urea + 2 H2O + H(+) = hydrogencarbonate + 2 NH4(+). It functions in the pathway nitrogen metabolism; urea degradation; CO(2) and NH(3) from urea (urease route): step 1/1. This chain is Urease subunit gamma, found in Haemophilus influenzae (strain PittEE).